The primary structure comprises 122 residues: Fluoride-specific ion channel FluC (122 aa).

Transmembrane regions (helical) follow at residues 4 to 24 (LAVL…SIFI), 33 to 53 (LGTM…SIYL), 66 to 86 (LLIT…LEGI), and 95 to 115 (LKAF…VALG). The Na(+) site is built by glycine 73 and threonine 76.

The protein belongs to the fluoride channel Fluc/FEX (TC 1.A.43) family.

The protein localises to the cell inner membrane. The enzyme catalyses fluoride(in) = fluoride(out). Its activity is regulated as follows. Na(+) is not transported, but it plays an essential structural role and its presence is essential for fluoride channel function. Fluoride-specific ion channel. Important for reducing fluoride concentration in the cell, thus reducing its toxicity. This is Fluoride-specific ion channel FluC from Hydrogenobaculum sp. (strain Y04AAS1).